The sequence spans 504 residues: Hydroxyisobutyraldehyde dehydrogenase (504 aa).

The Proton acceptor role is filled by Glu260. The active-site Nucleophile is Cys294.

It belongs to the aldehyde dehydrogenase family.

The protein resides in the cytoplasm. It catalyses the reaction 2-hydroxy-2-methylpropanal + NAD(+) + H2O = 2-hydroxy-2-methylpropanoate + NADH + 2 H(+). In terms of biological role, involved in the degradation of methyl tert-butyl ether (MTBE). Catalyzes the conversion of hydroxyisobutyraldehyde to hydroxyisobutyric acid (HIBA). This is Hydroxyisobutyraldehyde dehydrogenase from Mycolicibacterium austroafricanum (Mycobacterium austroafricanum).